The primary structure comprises 21 residues: 71 kDa F-actin-binding protein (21 aa).

It to yeast fimbrin. Post-translationally, the N-terminus is blocked.

In terms of biological role, binds directly to F-actin and induces actin filament bundling. May function as a regulator of actin filament organization. The sequence is that of 71 kDa F-actin-binding protein from Tetrahymena pyriformis.